A 510-amino-acid polypeptide reads, in one-letter code: JmjC domain-containing histone demethylation protein 1 (510 aa).

The segment at 2–53 (PNRCDFCTSSSTKDKQQWTQCDGCDRWVHDVCVSITDPVSYAKYHCPTCTKT) adopts a PHD-type zinc-finger fold. One can recognise a JmjC domain in the interval 216–365 (TLVRELDLVD…TQIDIAGIEV (150 aa)). A substrate-binding site is contributed by T255. Fe cation is bound by residues H258 and D260. K275 is a substrate binding site. A Fe cation-binding site is contributed by H333. Residues 475–510 (KGESKEKHKIESQLPEEKILQGSKLESKEEVQTENF) form a disordered region. Positions 477–510 (ESKEKHKIESQLPEEKILQGSKLESKEEVQTENF) are enriched in basic and acidic residues.

This sequence belongs to the JHDM1 histone demethylase family. The cofactor is Fe(2+).

The protein resides in the nucleus. The enzyme catalyses N(6),N(6)-dimethyl-L-lysyl(36)-[histone H3] + 2 2-oxoglutarate + 2 O2 = L-lysyl(36)-[histone H3] + 2 formaldehyde + 2 succinate + 2 CO2. Its function is as follows. Histone demethylase that specifically demethylates 'Lys-36' of histone H3, thereby playing a central role in histone code. The sequence is that of JmjC domain-containing histone demethylation protein 1 (JHD1) from Yarrowia lipolytica (strain CLIB 122 / E 150) (Yeast).